The chain runs to 414 residues: Tyrosine--tRNA ligase (414 aa).

Tyr-38 serves as a coordination point for L-tyrosine. Residues 43–52 (PTATSLHLGN) carry the 'HIGH' region motif. L-tyrosine is bound by residues Tyr-165 and Gln-169. The short motif at 228-232 (KFGKS) is the 'KMSKS' region element. Lys-231 contacts ATP. An S4 RNA-binding domain is found at 349-414 (FNANQIIDLG…KKYFFIIELI (66 aa)).

Belongs to the class-I aminoacyl-tRNA synthetase family. TyrS type 1 subfamily. In terms of assembly, homodimer.

Its subcellular location is the cytoplasm. The catalysed reaction is tRNA(Tyr) + L-tyrosine + ATP = L-tyrosyl-tRNA(Tyr) + AMP + diphosphate + H(+). Catalyzes the attachment of tyrosine to tRNA(Tyr) in a two-step reaction: tyrosine is first activated by ATP to form Tyr-AMP and then transferred to the acceptor end of tRNA(Tyr). The protein is Tyrosine--tRNA ligase of Mesomycoplasma hyopneumoniae (strain 232) (Mycoplasma hyopneumoniae).